Consider the following 195-residue polypeptide: Pyruvoyl-dependent arginine decarboxylase AaxB (195 aa).

The residue at position 53 (Ser53) is a Pyruvic acid (Ser).

It belongs to the pyruvoyl-dependent arginine decarboxylase family. In terms of assembly, trimer of an alpha-beta dimer. Pyruvate is required as a cofactor.

It is found in the cytoplasm. It carries out the reaction L-arginine + H(+) = agmatine + CO2. Its function is as follows. Part of the AaxABC system, catalyzes the decarboxylation of L-arginine. The arginine uptake by the bacterium in the macrophage may be a virulence factor against the host innate immune response. In Chlamydia trachomatis serovar D (strain ATCC VR-885 / DSM 19411 / UW-3/Cx), this protein is Pyruvoyl-dependent arginine decarboxylase AaxB (aaxB).